We begin with the raw amino-acid sequence, 662 residues long: Polyadenylate-binding protein 4 (662 aa).

Residues 1–23 (MAQVQAPSSHSPPPPAVVNDGAA) form a disordered region. RRM domains lie at 46 to 124 (CSLY…YSSR), 134 to 211 (GNLF…PFLR), 225 to 302 (TNVY…KAQK), and 328 to 405 (LNLY…LAQR). 2 stretches are compositionally biased toward low complexity: residues 480-489 (PMMQPGQQGP) and 506-518 (QQPM…QMMP). Disordered stretches follow at residues 480–518 (PMMQ…QMMP) and 634–662 (NQPS…NDHL). Residues 558–635 (SAGQLATSLA…ALDVLRNVNQ (78 aa)) form the PABC domain. Residues 634 to 649 (NQPSSQGSEGNKSGSP) show a composition bias toward polar residues.

The protein belongs to the polyadenylate-binding protein type-1 family. In terms of assembly, interacts with ERD15/CID1. Interacts with Turnip mosaic virus (TuMV) VPg-Pro.

Its subcellular location is the cytoplasm. It localises to the nucleus. Binds the poly(A) tail of mRNA. Appears to be an important mediator of the multiple roles of the poly(A) tail in mRNA biogenesis, stability and translation. During infection with potyvirus TuMV, acts as a potential integral component of the viral replicase complex that could play an important role in the regulation of potyviral RNA-dependent RNA polymerase (RdRp). The protein is Polyadenylate-binding protein 4 (PAB4) of Arabidopsis thaliana (Mouse-ear cress).